Reading from the N-terminus, the 432-residue chain is Mannose-6-phosphate isomerase 1 (432 aa).

Met1 carries the N-acetylmethionine modification. Zn(2+) contacts are provided by Gln124, His126, Glu151, and His288. Arg307 is a catalytic residue.

This sequence belongs to the mannose-6-phosphate isomerase type 1 family. Zn(2+) serves as cofactor. In terms of tissue distribution, constitutively expressed in both vegetative and reproductive organs under normal growth conditions (at protein level).

It carries out the reaction D-mannose 6-phosphate = D-fructose 6-phosphate. Its pathway is nucleotide-sugar biosynthesis; GDP-alpha-D-mannose biosynthesis; alpha-D-mannose 1-phosphate from D-fructose 6-phosphate: step 1/2. Inhibited by EDTA, Zn(2+), Cd(2+), Co(2+), p-chloromercuribenzoate and L-ascorbic acid (AsA). In terms of biological role, phosphomannose isomerase involved in the synthesis of the GDP-mannose and dolichol-phosphate-mannose required for a number of critical mannosyl transfer reactions. Involved in the ascorbic acid (AsA) biosynthesis. Required during the endosperm development. The chain is Mannose-6-phosphate isomerase 1 (PMI1) from Arabidopsis thaliana (Mouse-ear cress).